Here is a 654-residue protein sequence, read N- to C-terminus: MSSSNVEVFIPMSQENTNGFPTTTSNDRKAFTEGAVLSFHNICYRVKVKSGFLPGRKPVEKEILSNINGIMKPGLNAILGPTGGGKSSLLDVLAARKDPSGLSGDVLINGALRPTNFKCNSGYVVQDDVVMGTLTVRENLQFSAALRLPTTMTNHEKNERINRVIQELGLDKVADSKVGTQFIRGVSGGERKRTSIGMELITDPSILFLDEPTTGLDSSTANAVLLLLKRMSKQGRTIIFSIHQPRYSIFKLFDSLTLLASGRLMFHGPAQEALGYFESAGYHCEAYNNPADFFLDIINGDSTAVALNREEDFKATEIIEPSKRDKPLVEKLAEIYVDSSFYKETKAELHQLSGGEKKKITVFKEISYTTSFCHQLRWVSKRSFKNLLGNPQASIAQIIVTVILGLVIGAIYFGLNNDSTGIQNRAGVLFFLTTNQCFSSVSAVELFVVEKKLFIHEYISGYYRVSSYFFGKLLSDLLPMRMLPSIIFTCIVYFMLGLKPTADAFFIMMFTLMMVAYSASSMALAIAAGQSVVSVATLLMTICFVFMMIFSGLLVNLTTIASWLSWLQYFSIPRYGFTALQHNEFLGQNFCPGLNATVNNTCNYATCTGEEYLAKQGIDLSPWGLWKNHVALACMIVIFLTIAYLKLLFLKKYS.

The Cytoplasmic portion of the chain corresponds to 1-394 (MSSSNVEVFI…KNLLGNPQAS (394 aa)). Residues 37 to 286 (LSFHNICYRV…FESAGYHCEA (250 aa)) form the ABC transporter domain. Residues 80–87 (GPTGGGKS), 184–190 (RGVSGGE), Glu-211, and His-243 each bind ATP. The ABC transmembrane type-2 domain occupies 388–650 (LGNPQASIAQ…TIAYLKLLFL (263 aa)). A helical membrane pass occupies residues 395–415 (IAQIIVTVILGLVIGAIYFGL). The Extracellular segment spans residues 416-427 (NNDSTGIQNRAG). N-linked (GlcNAc...) asparagine glycosylation is present at Asn-417. A helical transmembrane segment spans residues 428-448 (VLFFLTTNQCFSSVSAVELFV). Topologically, residues 449–476 (VEKKLFIHEYISGYYRVSSYFFGKLLSD) are cytoplasmic. Residues 477-497 (LLPMRMLPSIIFTCIVYFMLG) form a helical membrane-spanning segment. The Extracellular segment spans residues 498–505 (LKPTADAF). A helical transmembrane segment spans residues 506–526 (FIMMFTLMMVAYSASSMALAI). The Cytoplasmic portion of the chain corresponds to 527-534 (AAGQSVVS). Residues 535-555 (VATLLMTICFVFMMIFSGLLV) traverse the membrane as a helical segment. Residues Asn-556, Asn-595, and Asn-599 are each glycosylated (N-linked (GlcNAc...) asparagine). The Extracellular portion of the chain corresponds to 556-629 (NLTTIASWLS…LSPWGLWKNH (74 aa)). Cys-591 and Cys-607 form a disulfide bridge. A helical membrane pass occupies residues 630 to 650 (VALACMIVIFLTIAYLKLLFL). Residues 651–654 (KKYS) are Cytoplasmic-facing.

The protein belongs to the ABC transporter superfamily. ABCG family. Eye pigment precursor importer (TC 3.A.1.204) subfamily. As to quaternary structure, homodimer; disulfide-linked. The minimal functional unit is a homodimer, but the major oligomeric form in plasma membrane is a homotetramer with possibility of higher order oligomerization up to homododecamers. Post-translationally, N-glycosylated. Glycosylation-deficient ABCG2 is normally expressed and functional. Phosphorylated. Phosphorylation may regulate the localization to the plasma membrane, the homooligomerization and therefore, the activity of the transporter.

The protein resides in the cell membrane. It localises to the apical cell membrane. The protein localises to the mitochondrion membrane. It catalyses the reaction ATP + H2O + xenobioticSide 1 = ADP + phosphate + xenobioticSide 2.. The enzyme catalyses urate(in) + ATP + H2O = urate(out) + ADP + phosphate + H(+). The catalysed reaction is indoxyl sulfate(in) + ATP + H2O = indoxyl sulfate(out) + ADP + phosphate + H(+). It carries out the reaction sphing-4-enine 1-phosphate(in) + ATP + H2O = sphing-4-enine 1-phosphate(out) + ADP + phosphate + H(+). It catalyses the reaction estrone 3-sulfate(in) + ATP + H2O = estrone 3-sulfate(out) + ADP + phosphate + H(+). The enzyme catalyses dehydroepiandrosterone 3-sulfate(in) + ATP + H2O = dehydroepiandrosterone 3-sulfate(out) + ADP + phosphate + H(+). The catalysed reaction is 4-methylumbelliferone sulfate(in) + ATP + H2O = 4-methylumbelliferone sulfate(out) + ADP + phosphate + H(+). It carries out the reaction 5,7-dimethyl-2-methylamino-4-(3-pyridylmethyl)-1,3-benzothiazol-6-yl beta-D-glucuronate(in) + ATP + H2O = 5,7-dimethyl-2-methylamino-4-(3-pyridylmethyl)-1,3-benzothiazol-6-yl beta-D-glucuronate(out) + ADP + phosphate + H(+). It catalyses the reaction 4-methylumbelliferone beta-D-glucuronate(in) + ATP + H2O = 4-methylumbelliferone beta-D-glucuronate(out) + ADP + phosphate + H(+). The enzyme catalyses 5,7-dimethyl-2-methylamino-4-(3-pyridylmethyl)-1,3-benzothiazol-6-yl sulfate(in) + ATP + H2O = 5,7-dimethyl-2-methylamino-4-(3-pyridylmethyl)-1,3-benzothiazol-6-yl sulfate(out) + ADP + phosphate + H(+). The catalysed reaction is 17beta-estradiol 17-O-(beta-D-glucuronate)(in) + ATP + H2O = 17beta-estradiol 17-O-(beta-D-glucuronate)(out) + ADP + phosphate + H(+). It carries out the reaction methotrexate(in) + ATP + H2O = methotrexate(out) + ADP + phosphate + H(+). It catalyses the reaction riboflavin(in) + ATP + H2O = riboflavin(out) + ADP + phosphate + H(+). The enzyme catalyses pheophorbide a(in) + ATP + H2O = pheophorbide a(out) + ADP + phosphate + H(+). The catalysed reaction is itaconate(in) + ATP + H2O = itaconate(out) + ADP + phosphate + H(+). In terms of biological role, broad substrate specificity ATP-dependent transporter of the ATP-binding cassette (ABC) family that actively extrudes a wide variety of physiological compounds, dietary toxins and xenobiotics from cells. Involved in porphyrin homeostasis, mediating the export of protoporphyrin IX (PPIX) from both mitochondria to cytosol and cytosol to extracellular space, it also functions in the cellular export of heme. Also mediates the efflux of sphingosine-1-P from cells. Acts as a urate exporter functioning in both renal and extrarenal urate excretion. In kidney, it also functions as a physiological exporter of the uremic toxin indoxyl sulfate. Also involved in the excretion of steroids like estrone 3-sulfate/E1S, 3beta-sulfooxy-androst-5-en-17-one/DHEAS, and other sulfate conjugates. Mediates the secretion of the riboflavin and biotin vitamins into milk. Extrudes pheophorbide a, a phototoxic porphyrin catabolite of chlorophyll, reducing its bioavailability. Plays an important role in the exclusion of xenobiotics from the brain. It confers to cells a resistance to multiple drugs and other xenobiotics including mitoxantrone, pheophorbide, camptothecin, methotrexate, azidothymidine, and the anthracyclines daunorubicin and doxorubicin, through the control of their efflux. In placenta, it limits the penetration of drugs from the maternal plasma into the fetus. May play a role in early stem cell self-renewal by blocking differentiation. In inflammatory macrophages, exports itaconate from the cytosol to the extracellular compartment and limits the activation of TFEB-dependent lysosome biogenesis involved in antibacterial innate immune response. The protein is Broad substrate specificity ATP-binding cassette transporter ABCG2 (ABCG2) of Macaca mulatta (Rhesus macaque).